Reading from the N-terminus, the 404-residue chain is Tryptophan synthase beta chain (404 aa).

Position 98 is an N6-(pyridoxal phosphate)lysine (lysine 98).

This sequence belongs to the TrpB family. As to quaternary structure, tetramer of two alpha and two beta chains. It depends on pyridoxal 5'-phosphate as a cofactor.

The catalysed reaction is (1S,2R)-1-C-(indol-3-yl)glycerol 3-phosphate + L-serine = D-glyceraldehyde 3-phosphate + L-tryptophan + H2O. It functions in the pathway amino-acid biosynthesis; L-tryptophan biosynthesis; L-tryptophan from chorismate: step 5/5. The beta subunit is responsible for the synthesis of L-tryptophan from indole and L-serine. In Rhodopseudomonas palustris (strain ATCC BAA-98 / CGA009), this protein is Tryptophan synthase beta chain.